The primary structure comprises 859 residues: Leucine--tRNA ligase (859 aa).

Positions 42–52 match the 'HIGH' region motif; sequence PYPSGRLHMGH. A 'KMSKS' region motif is present at residues 618–622; sequence KMSKS. K621 is an ATP binding site.

It belongs to the class-I aminoacyl-tRNA synthetase family.

The protein resides in the cytoplasm. It catalyses the reaction tRNA(Leu) + L-leucine + ATP = L-leucyl-tRNA(Leu) + AMP + diphosphate. The protein is Leucine--tRNA ligase of Shewanella amazonensis (strain ATCC BAA-1098 / SB2B).